Consider the following 245-residue polypeptide: tRNA1(Val) (adenine(37)-N6)-methyltransferase (245 aa).

It belongs to the methyltransferase superfamily. tRNA (adenine-N(6)-)-methyltransferase family.

The protein localises to the cytoplasm. The enzyme catalyses adenosine(37) in tRNA1(Val) + S-adenosyl-L-methionine = N(6)-methyladenosine(37) in tRNA1(Val) + S-adenosyl-L-homocysteine + H(+). In terms of biological role, specifically methylates the adenine in position 37 of tRNA(1)(Val) (anticodon cmo5UAC). This is tRNA1(Val) (adenine(37)-N6)-methyltransferase from Escherichia coli O6:K15:H31 (strain 536 / UPEC).